The chain runs to 291 residues: START domain-containing protein 10 (291 aa).

Residue methionine 1 is modified to N-acetylmethionine. The disordered stretch occupies residues 1–23; that stretch reads MEKPAASTEPQGSRPALGRESVQ. The START domain maps to 14 to 224; it reads RPALGRESVQ…MYKACIKYPE (211 aa). N6-succinyllysine is present on residues lysine 94, lysine 197, and lysine 202. 4 positions are modified to phosphoserine: serine 253, serine 259, serine 284, and serine 289. The segment at 260–291 is disordered; sequence LENIDESAVTESREERAGGAGGEGSDDDTSLT.

In terms of processing, phosphorylation at Ser-284 by CK2 negatively regulates lipid transfer activity, possibly by decreasing membrane association. As to expression, testis, kidney, liver, and intestine with the highest level in the testis.

It localises to the cell projection. The protein resides in the cilium. It is found in the flagellum. The protein localises to the cytoplasm. Its subcellular location is the membrane. In terms of biological role, phospholipid transfer protein that preferentially selects lipid species containing a palmitoyl or stearoyl chain on the sn-1 and an unsaturated fatty acyl chain (18:1 or 18:2) on the sn-2 position. Able to transfer phosphatidylcholine (PC) and phosphatidyetanolamline (PE) between membranes. May play metabolic roles in sperm maturation or fertilization. The polypeptide is START domain-containing protein 10 (Stard10) (Mus musculus (Mouse)).